A 457-amino-acid polypeptide reads, in one-letter code: Adenylyltransferase and sulfurtransferase MOCS3 (457 aa).

The segment at 40 to 60 (ANGGGNGDGLADEGGERNTGT) is disordered. Thr-63 carries the post-translational modification Phosphothreonine. ATP is bound by residues Gly-102, Asp-123, 130–134 (SNFHR), Lys-147, and 191–192 (DN). Residues Cys-233 and Cys-236 each contribute to the Zn(2+) site. The Glycyl thioester intermediate; for adenylyltransferase activity role is filled by Cys-250. The Zn(2+) site is built by Cys-309 and Cys-312. Positions 358 to 455 (ESQPHLLFDV…WTRKVDPDFP (98 aa)) constitute a Rhodanese domain. Catalysis depends on Cys-414, which acts as the Cysteine persulfide intermediate; for sulfurtransferase activity.

The protein in the N-terminal section; belongs to the HesA/MoeB/ThiF family. UBA4 subfamily. It depends on Zn(2+) as a cofactor.

The protein resides in the cytoplasm. It localises to the cytosol. It carries out the reaction [molybdopterin-synthase sulfur-carrier protein]-C-terminal Gly-Gly + ATP + H(+) = [molybdopterin-synthase sulfur-carrier protein]-C-terminal Gly-Gly-AMP + diphosphate. The enzyme catalyses [molybdopterin-synthase sulfur-carrier protein]-C-terminal Gly-Gly-AMP + S-sulfanyl-L-cysteinyl-[cysteine desulfurase] + AH2 = [molybdopterin-synthase sulfur-carrier protein]-C-terminal-Gly-aminoethanethioate + L-cysteinyl-[cysteine desulfurase] + A + AMP + 2 H(+). It functions in the pathway tRNA modification; 5-methoxycarbonylmethyl-2-thiouridine-tRNA biosynthesis. It participates in cofactor biosynthesis; molybdopterin biosynthesis. In terms of biological role, plays a central role in 2-thiolation of mcm(5)S(2)U at tRNA wobble positions of cytosolic tRNA(Lys), tRNA(Glu) and tRNA(Gln). Also essential during biosynthesis of the molybdenum cofactor. Acts by mediating the C-terminal thiocarboxylation of sulfur carriers URM1 and MOCS2A. Its N-terminus first activates URM1 and MOCS2A as acyl-adenylates (-COAMP), then the persulfide sulfur on the catalytic cysteine is transferred to URM1 and MOCS2A to form thiocarboxylation (-COSH) of their C-terminus. The reaction probably involves hydrogen sulfide that is generated from the persulfide intermediate and that acts as a nucleophile towards URM1 and MOCS2A. Subsequently, a transient disulfide bond is formed. Does not use thiosulfate as sulfur donor; NFS1 probably acting as a sulfur donor for thiocarboxylation reactions. The sequence is that of Adenylyltransferase and sulfurtransferase MOCS3 from Drosophila willistoni (Fruit fly).